We begin with the raw amino-acid sequence, 397 residues long: UDP-GlcNAc:betaGal beta-1,3-N-acetylglucosaminyltransferase 8 (397 aa).

The Cytoplasmic segment spans residues 1 to 6 (MRCPKC). The chain crosses the membrane as a helical; Signal-anchor for type II membrane protein span at residues 7-23 (LLCLSALLTLLGLKVYI). Residues 24–397 (EWTSESRLSK…KQLQDPRLQC (374 aa)) are Lumenal-facing. Residues 33–58 (KAYPSPRGTPPSPTPANPEPTLPANL) form a disordered region. The segment covering 39 to 53 (RGTPPSPTPANPEPT) has biased composition (pro residues). The N-linked (GlcNAc...) asparagine glycan is linked to Asn57.

The protein belongs to the glycosyltransferase 31 family. Interacts with B3GNT2; this interaction greatly increases B3GNT2 catalytic activity, independently of B3GNT8 enzymatic activity. Highly expressed in small intestine, pancreas, spleen, bone marrow, lung, throat, and ileum, and weakly in fetal brain, cerebellum, heart, liver, tongue, breast, uteri, and testis. Not detected in colon. Differentially expressed in human tumor cell lines.

Its subcellular location is the golgi apparatus membrane. Its pathway is protein modification; protein glycosylation. In terms of biological role, beta-1,3-N-acetylglucosaminyltransferase that plays a role in the elongation of specific branch structures of multiantennary N-glycans. Has strong activity towards tetraantennary N-glycans and 2,6 triantennary glycans. This chain is UDP-GlcNAc:betaGal beta-1,3-N-acetylglucosaminyltransferase 8, found in Homo sapiens (Human).